A 261-amino-acid chain; its full sequence is 3-hydroxyacyl-CoA dehydrogenase type-2 (261 aa).

Residue Ala-2 is modified to N-acetylalanine. 2 residues coordinate NAD(+): Ser-20 and Asp-41. Lys-53 carries the N6-acetyllysine; alternate modification. The residue at position 53 (Lys-53) is an N6-succinyllysine; alternate. Val-65 is an NAD(+) binding site. The residue at position 69 (Lys-69) is an N6-acetyllysine. NAD(+) is bound at residue Cys-91. N6-acetyllysine occurs at positions 99 and 105. Residue Lys-107 is modified to N6-acetyllysine; alternate. Lys-107 carries the post-translational modification N6-succinyllysine; alternate. Ser-155 lines the substrate pocket. NAD(+) is bound by residues Tyr-168, Lys-172, Phe-201, and Thr-203. Tyr-168 serves as the catalytic Proton acceptor. The residue at position 212 (Lys-212) is an N6-acetyllysine; alternate. An N6-succinyllysine; alternate modification is found at Lys-212.

The protein belongs to the short-chain dehydrogenases/reductases (SDR) family. As to quaternary structure, homotetramer. Component of mitochondrial ribonuclease P, a complex composed of TRMT10C/MRPP1, HSD17B10/MRPP2 and PRORP/MRPP3. Interacts with TRMT10C/MRPP1; forming the MRPP1-MRPP2 subcomplex of the mitochondrial ribonuclease P complex.

Its subcellular location is the mitochondrion. It localises to the mitochondrion matrix. It is found in the mitochondrion nucleoid. It catalyses the reaction a (3S)-3-hydroxyacyl-CoA + NAD(+) = a 3-oxoacyl-CoA + NADH + H(+). It carries out the reaction (2S,3S)-3-hydroxy-2-methylbutanoyl-CoA + NAD(+) = 2-methyl-3-oxobutanoyl-CoA + NADH + H(+). The enzyme catalyses testosterone + NAD(+) = androst-4-ene-3,17-dione + NADH + H(+). The catalysed reaction is 5alpha-androstane-3alpha,17beta-diol + NAD(+) = 17beta-hydroxy-5alpha-androstan-3-one + NADH + H(+). It catalyses the reaction 17beta-estradiol + NAD(+) = estrone + NADH + H(+). It carries out the reaction cholate + NAD(+) = 3alpha,12alpha-dihydroxy-7-oxo-5beta-cholanate + NADH + H(+). The enzyme catalyses (3S)-3-hydroxybutanoyl-CoA + NAD(+) = acetoacetyl-CoA + NADH + H(+). The catalysed reaction is (3S)-hydroxyoctanoyl-CoA + NAD(+) = 3-oxooctanoyl-CoA + NADH + H(+). It catalyses the reaction (3S)-hydroxyhexadecanoyl-CoA + NAD(+) = 3-oxohexadecanoyl-CoA + NADH + H(+). It carries out the reaction 17beta-hydroxy-5alpha-androstan-3-one + NAD(+) = 5alpha-androstan-3,17-dione + NADH + H(+). The enzyme catalyses 5alpha-pregnan-20beta-ol-3-one + NAD(+) = 5alpha-pregnane-3,20-dione + NADH + H(+). The catalysed reaction is 3alpha-hydroxy-5alpha-pregnan-20-one + NAD(+) = 5alpha-pregnane-3,20-dione + NADH + H(+). It catalyses the reaction cortisone + NAD(+) = 17alpha-hydroxypregn-4-en-3,11,20-trione-21-al + NADH + H(+). It carries out the reaction 11-dehydrocorticosterone + NAD(+) = pregn-4-ene-3,11,20,21-tetraone + NADH + H(+). The enzyme catalyses cortisol + NAD(+) = 11beta,17alpha-dihydroxypregn-4-ene-3,20,21-trione + NADH + H(+). The catalysed reaction is chenodeoxycholate + NAD(+) = 7-oxolithocholate + NADH + H(+). It catalyses the reaction ursodeoxycholate + NAD(+) = 7-oxolithocholate + NADH + H(+). It carries out the reaction 3beta,7beta-dihydroxy-5beta-cholan-24-oate + NAD(+) = 3beta-hydroxy-7-oxo-5beta-cholan-24-oate + NADH + H(+). The protein operates within amino-acid degradation; L-isoleucine degradation. It functions in the pathway lipid metabolism; fatty acid beta-oxidation. Its pathway is steroid metabolism. It participates in lipid metabolism; bile acid biosynthesis. Its function is as follows. Mitochondrial dehydrogenase involved in pathways of fatty acid, branched-chain amino acid and steroid metabolism. Acts as (S)-3-hydroxyacyl-CoA dehydrogenase in mitochondrial fatty acid beta-oxidation, a major degradation pathway of fatty acids. Catalyzes the third step in the beta-oxidation cycle, namely the reversible conversion of (S)-3-hydroxyacyl-CoA to 3-ketoacyl-CoA. Preferentially accepts straight medium- and short-chain acyl-CoA substrates with highest efficiency for (3S)-hydroxybutanoyl-CoA. Acts as 3-hydroxy-2-methylbutyryl-CoA dehydrogenase in branched-chain amino acid catabolic pathway. Catalyzes the oxidation of 3-hydroxy-2-methylbutanoyl-CoA into 2-methyl-3-oxobutanoyl-CoA, a step in isoleucine degradation pathway. Has hydroxysteroid dehydrogenase activity toward steroid hormones and bile acids. Catalyzes the oxidation of 3alpha-, 17beta-, 20beta- and 21-hydroxysteroids and 7alpha- and 7beta-hydroxy bile acids. Oxidizes allopregnanolone/brexanolone at the 3alpha-hydroxyl group, which is known to be critical for the activation of gamma-aminobutyric acid receptors (GABAARs) chloride channel. Has phospholipase C-like activity toward cardiolipin and its oxidized species. Likely oxidizes the 2'-hydroxyl in the head group of cardiolipin to form a ketone intermediate that undergoes nucleophilic attack by water and fragments into diacylglycerol, dihydroxyacetone and orthophosphate. Has higher affinity for cardiolipin with oxidized fatty acids and may degrade these species during the oxidative stress response to protect cells from apoptosis. By interacting with intracellular amyloid-beta, it may contribute to the neuronal dysfunction associated with Alzheimer disease (AD). Essential for structural and functional integrity of mitochondria. Functionally, in addition to mitochondrial dehydrogenase activity, moonlights as a component of mitochondrial ribonuclease P, a complex that cleaves tRNA molecules in their 5'-ends. Together with TRMT10C/MRPP1, forms a subcomplex of the mitochondrial ribonuclease P, named MRPP1-MRPP2 subcomplex, which displays functions that are independent of the ribonuclease P activity. The MRPP1-MRPP2 subcomplex catalyzes the formation of N(1)-methylguanine and N(1)-methyladenine at position 9 (m1G9 and m1A9, respectively) in tRNAs; HSD17B10/MRPP2 acting as a non-catalytic subunit. The MRPP1-MRPP2 subcomplex also acts as a tRNA maturation platform: following 5'-end cleavage by the mitochondrial ribonuclease P complex, the MRPP1-MRPP2 subcomplex enhances the efficiency of 3'-processing catalyzed by ELAC2, retains the tRNA product after ELAC2 processing and presents the nascent tRNA to the mitochondrial CCA tRNA nucleotidyltransferase TRNT1 enzyme. Associates with mitochondrial DNA complexes at the nucleoids to initiate RNA processing and ribosome assembly. The protein is 3-hydroxyacyl-CoA dehydrogenase type-2 (Hsd17b10) of Mus musculus (Mouse).